Reading from the N-terminus, the 328-residue chain is N-acetyl-gamma-glutamyl-phosphate reductase (328 aa).

C143 is a catalytic residue.

The protein belongs to the NAGSA dehydrogenase family. Type 1 subfamily.

The protein resides in the cytoplasm. It catalyses the reaction N-acetyl-L-glutamate 5-semialdehyde + phosphate + NADP(+) = N-acetyl-L-glutamyl 5-phosphate + NADPH + H(+). It functions in the pathway amino-acid biosynthesis; L-arginine biosynthesis; N(2)-acetyl-L-ornithine from L-glutamate: step 3/4. Its function is as follows. Catalyzes the NADPH-dependent reduction of N-acetyl-5-glutamyl phosphate to yield N-acetyl-L-glutamate 5-semialdehyde. The polypeptide is N-acetyl-gamma-glutamyl-phosphate reductase (Methanoregula boonei (strain DSM 21154 / JCM 14090 / 6A8)).